Reading from the N-terminus, the 168-residue chain is Mediator of RNA polymerase II transcription subunit 31 (168 aa).

Residues 113–159 (EGEDQDVEESEEETVENEQKESEDEEDVVIVEKPEDEQEEQAEEAAE) show a composition bias toward acidic residues. The tract at residues 113–168 (EGEDQDVEESEEETVENEQKESEDEEDVVIVEKPEDEQEEQAEEAAEPTDTSLLNT) is disordered.

Belongs to the Mediator complex subunit 31 family. In terms of assembly, component of the Mediator complex.

It localises to the nucleus. Component of the Mediator complex, a coactivator involved in the regulated transcription of nearly all RNA polymerase II-dependent genes. Mediator functions as a bridge to convey information from gene-specific regulatory proteins to the basal RNA polymerase II transcription machinery. Mediator is recruited to promoters by direct interactions with regulatory proteins and serves as a scaffold for the assembly of a functional preinitiation complex with RNA polymerase II and the general transcription factors. The polypeptide is Mediator of RNA polymerase II transcription subunit 31 (mdt-31) (Caenorhabditis briggsae).